A 142-amino-acid chain; its full sequence is Hemoglobin subunit zeta (142 aa).

Residue S2 is modified to N-acetylserine. The Globin domain maps to 2–142 (SLMKNERAII…LSSILTEKYR (141 aa)). T29 carries the post-translational modification Phosphothreonine. S53 bears the Phosphoserine mark. H59 lines the heme b pocket. S73 is subject to Phosphoserine. Position 88 (H88) interacts with heme b.

The protein belongs to the globin family. In terms of assembly, heterotetramer of two zeta chains and beta-type chains.

The zeta chain is an alpha-type chain of mammalian embryonic hemoglobin. The polypeptide is Hemoglobin subunit zeta (Hbz) (Mus musculus (Mouse)).